The sequence spans 259 residues: Peroxisomal membrane protein 11B (259 aa).

Position 43 is an N6-acetyllysine (K43). A disordered region spans residues 157–176; it reads LKGSGGGVPGGSETGGLGGP. Positions 159–176 are enriched in gly residues; the sequence is GSGGGVPGGSETGGLGGP. Positions 211–259 are interaction with PEX19, PEX11G and FIS1 and peroxisome targeting; it reads VVRNACDLFIPLDKLGLWRCGPGIVGLCGLVSSILSILTLIYPWLRLKP. Residues 233–255 form a helical membrane-spanning segment; the sequence is GIVGLCGLVSSILSILTLIYPWL.

It belongs to the peroxin-11 family. Homodimer. Heterodimer with PEX11G. Interacts with PEX19. Interacts with FIS1.

Its subcellular location is the peroxisome membrane. Functionally, involved in peroxisomal proliferation. May regulate peroxisome division by recruiting the dynamin-related GTPase DNM1L to the peroxisomal membrane. Promotes membrane protrusion and elongation on the peroxisomal surface. The chain is Peroxisomal membrane protein 11B (PEX11B) from Homo sapiens (Human).